A 353-amino-acid chain; its full sequence is 6-phosphogluconolactonase (353 aa).

This sequence belongs to the cycloisomerase 2 family.

The protein localises to the cytoplasm. It carries out the reaction 6-phospho-D-glucono-1,5-lactone + H2O = 6-phospho-D-gluconate + H(+). It participates in carbohydrate degradation; pentose phosphate pathway; D-ribulose 5-phosphate from D-glucose 6-phosphate (oxidative stage): step 2/3. Functionally, carboxylic ester hydrolase that may be involved in ulvan degradation. Ulvan is the main polysaccharide component of the Ulvales (green seaweed) cell wall. It is composed of disaccharide building blocks comprising 3-sulfated rhamnose (Rha3S) linked to D-glucuronic acid (GlcA), L-iduronic acid (IduA), or D-xylose (Xyl). Catalyzes the hydrolysis of 6-phosphogluconolactone to 6-phosphogluconate. The sequence is that of 6-phosphogluconolactonase (pgl) from Formosa agariphila (strain DSM 15362 / KCTC 12365 / LMG 23005 / KMM 3901 / M-2Alg 35-1).